The sequence spans 612 residues: uncharacterized protein (612 aa).

Residues E8–G75 enclose the J domain. The chain crosses the membrane as a helical span at residues A445–L465.

The protein belongs to the DnaJ family.

Its subcellular location is the membrane. This is an uncharacterized protein from Schizosaccharomyces pombe (strain 972 / ATCC 24843) (Fission yeast).